The chain runs to 292 residues: 1D-myo-inositol 2-acetamido-2-deoxy-alpha-D-glucopyranoside deacetylase (292 aa).

3 residues coordinate Zn(2+): H12, D15, and H147.

It belongs to the MshB deacetylase family. It depends on Zn(2+) as a cofactor.

It carries out the reaction 1D-myo-inositol 2-acetamido-2-deoxy-alpha-D-glucopyranoside + H2O = 1D-myo-inositol 2-amino-2-deoxy-alpha-D-glucopyranoside + acetate. Its function is as follows. Catalyzes the deacetylation of 1D-myo-inositol 2-acetamido-2-deoxy-alpha-D-glucopyranoside (GlcNAc-Ins) in the mycothiol biosynthesis pathway. The sequence is that of 1D-myo-inositol 2-acetamido-2-deoxy-alpha-D-glucopyranoside deacetylase from Rhodococcus opacus (strain B4).